The sequence spans 163 residues: Staphylokinase (163 aa).

A signal peptide spans 1 to 27; it reads MLKRSLLFLTVLLLLFSFSSITNEVSA.

This sequence belongs to the staphylokinase family.

The protein resides in the secreted. Its function is as follows. Potent plasminogen activator that converts plasminogen into plasmin. It forms a 1:1 complex with plasmin, which in turn activates other plasminogen molecules. This Staphylococcus phage S phi-C (Bacteriophage S phi-C) protein is Staphylokinase.